The sequence spans 226 residues: Ornithine decarboxylase antizyme (226 aa).

This sequence belongs to the ODC antizyme family. In terms of assembly, interacts with ODC and thereby sterically blocks ODC homodimerization.

Ornithine decarboxylase (ODC) antizyme protein that negatively regulates ODC activity and intracellular polyamine biosynthesis in response to increased intracellular polyamine levels. Binds to ODC monomers, inhibiting the assembly of the functional ODC homodimer, and targets the monomers for ubiquitin-independent proteolytic destruction by the 26S proteasome. In Schizosaccharomyces pombe (strain 972 / ATCC 24843) (Fission yeast), this protein is Ornithine decarboxylase antizyme (spa1).